The sequence spans 614 residues: Protein NRT1/ PTR FAMILY 7.3 (614 aa).

Transmembrane regions (helical) follow at residues 41-61 and 87-107; these read WVAG…FFGV and WTGT…SYWG. The residue at position 111 (Thr111) is a Phosphothreonine. 9 helical membrane passes run 114 to 134, 152 to 172, 196 to 216, 226 to 246, 355 to 375, 390 to 410, 435 to 455, 515 to 535, and 559 to 579; these read IFQV…YMFL, MMEI…YGGY, IAFF…SNTI, WALG…LFLV, PIWL…SLFV, IPPA…IFLY, MGIG…VECY, LCMM…TMVV, and FYFL…ACAK. The disordered stretch occupies residues 592–614; it reads MQDMSDDDYDTESEEEREKDSKV. A compositionally biased stretch (acidic residues) spans 593-606; that stretch reads QDMSDDDYDTESEE.

The protein belongs to the major facilitator superfamily. Proton-dependent oligopeptide transporter (POT/PTR) (TC 2.A.17) family. High expression in roots. Barely detected in shoots. Expressed in root pericycle cells close to the xylem.

Its subcellular location is the cell membrane. Low-affinity proton-dependent bidirectional nitrate transporter. Involved in nitrate loading into xylem and not in nitrate uptake. Not involved in histidine or dipeptides transport. This chain is Protein NRT1/ PTR FAMILY 7.3 (NPF7.3), found in Arabidopsis thaliana (Mouse-ear cress).